The primary structure comprises 845 residues: Beta-mannosidase B (845 aa).

N-linked (GlcNAc...) asparagine glycosylation occurs at Asn-252. Glu-432 serves as the catalytic Proton donor. N-linked (GlcNAc...) asparagine glycans are attached at residues Asn-717 and Asn-723.

It belongs to the glycosyl hydrolase 2 family. Beta-mannosidase B subfamily.

It catalyses the reaction Hydrolysis of terminal, non-reducing beta-D-mannose residues in beta-D-mannosides.. The protein operates within glycan metabolism; N-glycan degradation. Its function is as follows. Exoglycosidase that cleaves the single beta-linked mannose residue from the non-reducing end of beta-mannosidic oligosaccharides of various complexity and length. Prefers mannobiose over mannotriose and has no activity against polymeric mannan. Is also severely restricted by galactosyl substitutions at the +1 subsite. The chain is Beta-mannosidase B (mndB) from Aspergillus fumigatus (strain CBS 144.89 / FGSC A1163 / CEA10) (Neosartorya fumigata).